The primary structure comprises 800 residues: Phenylalanine--tRNA ligase beta subunit (800 aa).

Residues T39 to L154 form the tRNA-binding domain. The B5 domain maps to C408–S483. 4 residues coordinate Mg(2+): D461, D467, E470, and E471. The FDX-ACB domain maps to P708–R800.

It belongs to the phenylalanyl-tRNA synthetase beta subunit family. Type 1 subfamily. As to quaternary structure, tetramer of two alpha and two beta subunits. Mg(2+) is required as a cofactor.

The protein resides in the cytoplasm. It catalyses the reaction tRNA(Phe) + L-phenylalanine + ATP = L-phenylalanyl-tRNA(Phe) + AMP + diphosphate + H(+). The sequence is that of Phenylalanine--tRNA ligase beta subunit from Staphylococcus saprophyticus subsp. saprophyticus (strain ATCC 15305 / DSM 20229 / NCIMB 8711 / NCTC 7292 / S-41).